A 1083-amino-acid chain; its full sequence is Histone-lysine N-methyltransferase ATX2 (1083 aa).

Positions 77 to 84 (HRRPEIVH) match the Nuclear localization signal motif. The region spanning 315-379 (PRDIIWAKLT…VKQAVSFLKG (65 aa)) is the PWWP domain. A disordered region spans residues 422–443 (TDCSERINSGEEDSSNSGDDYT). An FYR N-terminal domain is found at 457–516 (DCLHRIGDLQIINLGRIVTDSEFFKDSKHTWPEGYTATRKFISLKDPNASAMYKMEVLRD). One can recognise an FYR C-terminal domain in the interval 520–604 (KTRPVFRVTT…PPSKVSQRKY (85 aa)). The segment at 626 to 677 (LDKCNVCHMDEEYENNLFLQCDKCRMMVHTRCYGQLEPHNGILWLCNLCRPV) adopts a PHD-type 1 zinc-finger fold. A C2HC pre-PHD-type zinc finger spans residues 682-715 (PPRCCLCPVVGGAMKPTTDGRWAHLACAIWIPET). The segment at 682–807 (PPRCCLCPVV…RLLSFCKRHR (126 aa)) is extended PHD domain (ePHD). The segment at 739 to 807 (LLCSICGVSY…RLLSFCKRHR (69 aa)) adopts a PHD-type 2 zinc-finger fold. The region spanning 919 to 1037 (KRLAFGKSGI…KWEELTYDYR (119 aa)) is the SET domain. An S-adenosyl-L-methionine-binding site is contributed by His929. A glycan (O-linked (GlcNAc) serine) is linked at Ser968. Residues Tyr975 and 998–999 (NH) contribute to the S-adenosyl-L-methionine site. Cys1001 is a Zn(2+) binding site. Position 1036 (Tyr1036) interacts with S-adenosyl-L-methionine. Positions 1043-1059 (ERLACYCGFPRCRGVVN) constitute a Post-SET domain. Cys1047, Cys1049, and Cys1054 together coordinate Zn(2+).

The protein belongs to the class V-like SAM-binding methyltransferase superfamily. Histone-lysine methyltransferase family. TRX/MLL subfamily. Activated via O-glycosylation. Expressed in roots, leaves and flowers and, to a lower extent, in young seedlings.

It localises to the nucleus. It carries out the reaction N(6)-methyl-L-lysyl-[histone] + S-adenosyl-L-methionine = N(6),N(6)-dimethyl-L-lysyl-[histone] + S-adenosyl-L-homocysteine + H(+). Functionally, histone methyltransferase. Dimethylates 'Lys-4' of histone H3 (H3K4me2). H3 'Lys-4' methylation represents a specific tag for epigenetic transcriptional activation. Methylates only a limited fraction of nucleosomes of target genes (e.g. NAP and XTH33). Involved in epigenetic regulation of the floral repressor FLC and FT to prevent the transition from vegetative to reproductive development. This Arabidopsis thaliana (Mouse-ear cress) protein is Histone-lysine N-methyltransferase ATX2.